An 87-amino-acid polypeptide reads, in one-letter code: Co-chaperonin GroES (87 aa).

Belongs to the GroES chaperonin family. In terms of assembly, heptamer of 7 subunits arranged in a ring. Interacts with the chaperonin GroEL.

It is found in the cytoplasm. In terms of biological role, together with the chaperonin GroEL, plays an essential role in assisting protein folding. The GroEL-GroES system forms a nano-cage that allows encapsulation of the non-native substrate proteins and provides a physical environment optimized to promote and accelerate protein folding. GroES binds to the apical surface of the GroEL ring, thereby capping the opening of the GroEL channel. This chain is Co-chaperonin GroES, found in Campylobacter hominis (strain ATCC BAA-381 / DSM 21671 / CCUG 45161 / LMG 19568 / NCTC 13146 / CH001A).